Consider the following 315-residue polypeptide: HTH-type transcriptional regulator TreR (315 aa).

The 55-residue stretch at 5-59 (LTIKDIARLSGVGKSTVSRVLNNESGVSERTRERVEAVMNQHGFSPSRSARAMRG) folds into the HTH lacI-type domain. Positions 7-26 (IKDIARLSGVGKSTVSRVLN) form a DNA-binding region, H-T-H motif. Residues 71–77 (RLDSLSE), Gly126, Arg147, 187–190 (DITT), Arg194, Thr242, and Tyr284 each bind alpha,alpha-trehalose 6-phosphate.

Homodimer.

Repressor of the treBC operon. It is able to bind trehalose-6-phosphate. This is HTH-type transcriptional regulator TreR (treR) from Salmonella typhimurium (strain LT2 / SGSC1412 / ATCC 700720).